The following is an 886-amino-acid chain: Cytosolic carboxypeptidase-like protein 5 (886 aa).

The Peptidase M14 domain maps to 157–570; that stretch reads YPFSYSDCQE…AMAIAALDMA (414 aa). 2 residues coordinate Zn(2+): His252 and Glu255. Positions 344 to 354 are enriched in low complexity; it reads SQSSSEHQPSS. The tract at residues 344–364 is disordered; the sequence is SQSSSEHQPSSCLPPDAPVSD. Residue His434 coordinates Zn(2+). Glu516 serves as the catalytic Proton donor/acceptor. 2 disordered regions span residues 605–734 and 784–848; these read STLN…SSHK and LQAR…FSPI. A compositionally biased stretch (polar residues) spans 631–640; sequence CSENTLSRAR. The segment covering 641-666 has biased composition (low complexity); it reads SFSTGTSAGGSSSSQQNSPQMKNSPS. The span at 696-705 shows a compositional bias: basic and acidic residues; it reads REPRSQDRRR. Low complexity predominate over residues 714 to 732; it reads PAGSLAPSPAPTSSGPASS. The residue at position 841 (Ser841) is a Phosphoserine.

It belongs to the peptidase M14 family. It depends on Zn(2+) as a cofactor. Expressed in brain.

Its subcellular location is the cytoplasm. It localises to the cytosol. It is found in the nucleus. The protein localises to the cytoskeleton. The protein resides in the spindle. Its subcellular location is the midbody. The enzyme catalyses gamma-L-glutamyl-L-glutamyl-[protein] + H2O = L-glutamyl-[protein] + L-glutamate. It catalyses the reaction (L-glutamyl)(n+1)-gamma-L-glutamyl-L-glutamyl-[protein] + H2O = (L-glutamyl)(n)-gamma-L-glutamyl-L-glutamyl-[protein] + L-glutamate. It carries out the reaction C-terminal L-alpha-aminoacyl-L-glutamyl-[tubulin] + H2O = C-terminal L-alpha-aminoacyl-[tubulin] + L-glutamate. The catalysed reaction is C-terminal L-alpha-aminoacyl-L-glutamyl-L-glutamyl-[tubulin] + H2O = C-terminal L-alpha-aminoacyl-L-glutamyl-[tubulin] + L-glutamate. Its function is as follows. Metallocarboxypeptidase that mediates deglutamylation of tubulin and non-tubulin target proteins. Catalyzes the removal of polyglutamate side chains present on the gamma-carboxyl group of glutamate residues within the C-terminal tail of alpha- and beta-tubulin. Cleaves alpha- and gamma-linked polyglutamate tubulin side-chain, as well as the branching point glutamate. Also catalyzes the removal of alpha-linked glutamate residues from the carboxy-terminus of alpha-tubulin. Mediates deglutamylation of nucleotidyltransferase CGAS, leading to CGAS antiviral defense response activation. The sequence is that of Cytosolic carboxypeptidase-like protein 5 from Homo sapiens (Human).